A 90-amino-acid chain; its full sequence is MNITDVRIRKISAEGKMKAIVSVTFENQFVVHDIKVIEGQNGLFIAMPSRKTPDGEFKDIAHPIDTQTREQIQKAILDEYEKVKNLDMQE.

Belongs to the SpoVG family.

Could be involved in septation. This chain is Putative septation protein SpoVG, found in Clostridium perfringens (strain SM101 / Type A).